The primary structure comprises 644 residues: Core protein VP4 (644 aa).

This sequence belongs to the orbivirus VP4 family.

The protein localises to the virion. The VP4 protein is one of the five proteins (with VP1, VP3, VP6 and VP7) which form the inner capsid of the virus. This Antilocapra americana (Pronghorn) protein is Core protein VP4 (Segment-4).